The chain runs to 118 residues: Protein yippee-like 1 (118 aa).

One can recognise a Yippee domain in the interval 19–116; it reads RTYSCIHCRA…IELAHMIKDN (98 aa). 4 residues coordinate Zn(2+): C23, C26, C79, and C82. The short motif at 99–104 is the Nuclear localization signal element; that stretch reads KYKEGK.

It belongs to the yippee family.

The protein resides in the nucleus. Its function is as follows. May play a role in epithelioid conversion of fibroblasts. This Mus musculus (Mouse) protein is Protein yippee-like 1 (Ypel1).